The following is a 258-amino-acid chain: Acetylglutamate kinase (258 aa).

Residues 41 to 42 (GG), arginine 63, and asparagine 156 each bind substrate.

The protein belongs to the acetylglutamate kinase family. ArgB subfamily.

It localises to the cytoplasm. The catalysed reaction is N-acetyl-L-glutamate + ATP = N-acetyl-L-glutamyl 5-phosphate + ADP. Its pathway is amino-acid biosynthesis; L-arginine biosynthesis; N(2)-acetyl-L-ornithine from L-glutamate: step 2/4. Functionally, catalyzes the ATP-dependent phosphorylation of N-acetyl-L-glutamate. This chain is Acetylglutamate kinase, found in Bacillus licheniformis (strain ATCC 14580 / DSM 13 / JCM 2505 / CCUG 7422 / NBRC 12200 / NCIMB 9375 / NCTC 10341 / NRRL NRS-1264 / Gibson 46).